The primary structure comprises 347 residues: Trace amine-associated receptor 4 (347 aa).

Topologically, residues 1-37 (MNTPDPWSSPEVQFCFAAANSSCPRKARPALVVCAMY) are extracellular. An N-linked (GlcNAc...) asparagine glycan is attached at N20. Intrachain disulfides connect C23–C187 and C106–C191. A helical transmembrane segment spans residues 38–58 (LIMIGAIVMTMLGNMAVIISI). Residues 59–69 (AHFKQLHSPTN) lie on the Cytoplasmic side of the membrane. A helical membrane pass occupies residues 70–90 (FLILSMATTDFLLSCVVMPFS). Topologically, residues 91–110 (MIRSIESCWYFGDLFCKVHS) are extracellular. The chain crosses the membrane as a helical span at residues 111-129 (CCDIMLCTTSIFHLCFISV). Over 130-149 (DRHYAVCDPLHYVTQITTRV) the chain is Cytoplasmic. Residues 150-170 (VGVFLLISWSVPIFFAFGLVF) traverse the membrane as a helical segment. The Extracellular portion of the chain corresponds to 171–197 (SELNLIGAEDFVAAIDCTGLCVLIFNK). The interval 175-188 (LIGAEDFVAAIDCT) is extracellular Loop 2 (ECL2). The chain crosses the membrane as a helical span at residues 198–218 (LWGVLASFIAFFLPGTVMVGI). Over 219–260 (YIHIFTVAQKHARQIGTGPRTKQALSESKMKATSKKESKATK) the chain is Cytoplasmic. A helical transmembrane segment spans residues 261–281 (TLSIVMGVFVLCWLPFFVLTI). The Extracellular portion of the chain corresponds to 282-296 (TDPFIDFTTPEDLYN). The helical transmembrane segment at 297–317 (VFLWLGYFNSTFNPIIYGMFY) threads the bilayer. Residues 318-347 (PWFRKALRMIVTGTIFRSDSSTSSLHPAHP) are Cytoplasmic-facing.

It belongs to the G-protein coupled receptor 1 family. In terms of tissue distribution, specifically expressed in neurons of the olfactory epithelium, to discrete glomeruli predominantly localized to a confined bulb region. Present in the dorsal area of the main olfactory epithelium.

It localises to the cell membrane. In terms of biological role, olfactory receptor specific for 2-phenylethylamine, a trace amine present at high concentration in the urine of carnivore species, playing a key role in fear and avoidance responses. 2-phenylethylamine acts as a kairomone in the chemical detection of carnivore odor and triggers fear in mice. This receptor is probably mediated by the G(s)-class of G-proteins which activate adenylate cyclase. The chain is Trace amine-associated receptor 4 from Mus musculus (Mouse).